Here is a 244-residue protein sequence, read N- to C-terminus: 7-cyano-7-deazaguanine synthase (244 aa).

17–27 (FSGGQDSTTCL) is an ATP binding site. Zn(2+) contacts are provided by Cys205, Cys220, Cys223, and Cys226.

Belongs to the QueC family. Zn(2+) serves as cofactor.

It catalyses the reaction 7-carboxy-7-deazaguanine + NH4(+) + ATP = 7-cyano-7-deazaguanine + ADP + phosphate + H2O + H(+). The protein operates within purine metabolism; 7-cyano-7-deazaguanine biosynthesis. Catalyzes the ATP-dependent conversion of 7-carboxy-7-deazaguanine (CDG) to 7-cyano-7-deazaguanine (preQ(0)). The sequence is that of 7-cyano-7-deazaguanine synthase from Bordetella parapertussis (strain 12822 / ATCC BAA-587 / NCTC 13253).